We begin with the raw amino-acid sequence, 316 residues long: Taste receptor type 2 member 3 (316 aa).

The Extracellular portion of the chain corresponds to 1–7 (MLGFTEG). The chain crosses the membrane as a helical span at residues 8–28 (IFLVLTVTEFILGNLVNGFIV). Topologically, residues 29-50 (SVNGSHWFKSKKISLSDFIITS) are cytoplasmic. A helical membrane pass occupies residues 51-71 (LALFRIFLLWIIFTDSLIIVF). Residues 72 to 86 (SYHTHDSGIRMQLID) lie on the Extracellular side of the membrane. Residues 87 to 107 (VFWTFTNHFSIWLISCLSVFY) form a helical membrane-spanning segment. Over 108–128 (CLKIATFSHPSFLWLKWRASR) the chain is Cytoplasmic. A helical transmembrane segment spans residues 129–149 (VVVGMLWGALVLSCVCTMSLM). At 150 to 186 (NEFKIYSALTGSRDTQNMTEYIRLKRHEYNLMHVLGN) the chain is on the extracellular side. N166 is a glycosylation site (N-linked (GlcNAc...) asparagine). A helical transmembrane segment spans residues 187 to 207 (LWKIPSLIVSLIAYFLLLLSL). The Cytoplasmic portion of the chain corresponds to 208–234 (GKHTQQMQKYSVGSRDQSAEAHRRAMR). A helical membrane pass occupies residues 235–255 (IILSFLLFFLFYFLSFVILSS). Residues 256–266 (SRFLPETKIAR) lie on the Extracellular side of the membrane. A helical membrane pass occupies residues 267 to 287 (IIGVVITMSYLVGDSLILILG). The Cytoplasmic portion of the chain corresponds to 288 to 316 (NNKLKQTFVAILPCECGHPKPGSKRFFAS).

It belongs to the G-protein coupled receptor T2R family.

The protein resides in the membrane. Its function is as follows. Gustducin-coupled receptor implicated in the perception of bitter compounds in the oral cavity and the gastrointestinal tract. Signals through PLCB2 and the calcium-regulated cation channel TRPM5. In Rattus norvegicus (Rat), this protein is Taste receptor type 2 member 3.